The primary structure comprises 180 residues: UPF0690 protein C1orf52 homolog (180 aa).

Disordered regions lie at residues 1 to 66 and 96 to 180; these read MAAE…SVTR and KIWK…KKKK. Basic and acidic residues predominate over residues 48 to 61; it reads KQAEKRLPGPDELF. Thr-65 bears the Phosphothreonine mark. Tyr-130 is subject to Phosphotyrosine. Residues 149–160 show a composition bias toward acidic residues; the sequence is EGEETVESDDDK. Position 156 is a phosphoserine (Ser-156). Residues 161–180 are compositionally biased toward basic and acidic residues; the sequence is DERASKIRRVEPGEAAKKKK.

The protein belongs to the UPF0690 family.

The chain is UPF0690 protein C1orf52 homolog from Mus musculus (Mouse).